Reading from the N-terminus, the 740-residue chain is Alpha-1,6-mannosylglycoprotein 6-beta-N-acetylglucosaminyltransferase A (740 aa).

The Cytoplasmic portion of the chain corresponds to 1-13; it reads MAFFTPWKLSSQK. Residues 14–30 form a helical; Signal-anchor for type II membrane protein membrane-spanning segment; sequence LGFFLVTFGFIWGMMLL. Residues 31 to 740 lie on the Lumenal side of the membrane; that stretch reads HFTIQQRTQP…GQVALCKDCL (710 aa). Asparagine 109, asparagine 114, and asparagine 117 each carry an N-linked (GlcNAc...) asparagine glycan. 9 cysteine pairs are disulfide-bonded: cysteine 144/cysteine 182, cysteine 155/cysteine 195, cysteine 171/cysteine 337, cysteine 371/cysteine 625, cysteine 648/cysteine 723, cysteine 652/cysteine 725, cysteine 659/cysteine 712, cysteine 680/cysteine 701, and cysteine 736/cysteine 739. The segment at 212-740 is sufficient for catalytic activity; the sequence is NSLAEIRTDF…GQVALCKDCL (529 aa). Asparagine 333 carries N-linked (GlcNAc...) asparagine glycosylation. Substrate is bound at residue 377-378; the sequence is DS. N-linked (GlcNAc...) asparagine glycans are attached at residues asparagine 432 and asparagine 446. Glutamate 525 contributes to the UDP-N-acetyl-alpha-D-glucosamine binding site. Lysine 553 is a binding site for substrate.

It belongs to the glycosyltransferase 18 family. Post-translationally, N-glycosylated. In terms of processing, a secreted form is released from the membrane after cleavage by gamma-secretase.

The protein localises to the golgi apparatus membrane. Its subcellular location is the secreted. The enzyme catalyses N(4)-{beta-D-GlcNAc-(1-&gt;2)-[beta-D-GlcNAc-(1-&gt;4)]-alpha-D-Man-(1-&gt;3)-[beta-D-GlcNAc-(1-&gt;2)-alpha-D-Man-(1-&gt;6)]-beta-D-Man-(1-&gt;4)-beta-D-GlcNAc-(1-&gt;4)-beta-D-GlcNAc}-L-asparaginyl-[protein] + UDP-N-acetyl-alpha-D-glucosamine = N(4)-{beta-D-GlcNAc-(1-&gt;2)-[beta-D-GlcNAc-(1-&gt;4)]-alpha-D-Man-(1-&gt;3)-[beta-D-GlcNAc-(1-&gt;2)-[beta-D-GlcNAc-(1-&gt;6)]-alpha-D-Man-(1-&gt;6)]-beta-D-Man-(1-&gt;4)-beta-D-GlcNAc-(1-&gt;4)-beta-D-GlcNAc}-L-asparaginyl-[protein] + UDP + H(+). Its pathway is protein modification; protein glycosylation. Catalyzes the addition of N-acetylglucosamine (GlcNAc) in beta 1-6 linkage to the alpha-linked mannose of biantennary N-linked oligosaccharides. Catalyzes an important step in the biosynthesis of branched, complex-type N-glycans, such as those found on EGFR, TGFR (TGF-beta receptor) and CDH2. Via its role in the biosynthesis of complex N-glycans, plays an important role in the activation of cellular signaling pathways, reorganization of the actin cytoskeleton, cell-cell adhesion and cell migration. MGAT5-dependent EGFR N-glycosylation enhances the interaction between EGFR and LGALS3 and thereby prevents rapid EGFR endocytosis and prolongs EGFR signaling. Required for efficient interaction between TGFB1 and its receptor. Enhances activation of intracellular signaling pathways by several types of growth factors, including FGF2, PDGF, IGF, TGFB1 and EGF. MGAT5-dependent CDH2 N-glycosylation inhibits CDH2-mediated homotypic cell-cell adhesion and contributes to the regulation of downstream signaling pathways. Promotes cell migration. Contributes to the regulation of the inflammatory response. MGAT5-dependent TCR N-glycosylation enhances the interaction between TCR and LGALS3, limits agonist-induced TCR clustering, and thereby dampens TCR-mediated responses to antigens. Required for normal leukocyte evasation and accumulation at sites of inflammation. Inhibits attachment of monocytes to the vascular endothelium and subsequent monocyte diapedesis. Its function is as follows. Promotes proliferation of umbilical vein endothelial cells and angiogenesis, at least in part by promoting the release of the growth factor FGF2 from the extracellular matrix. This is Alpha-1,6-mannosylglycoprotein 6-beta-N-acetylglucosaminyltransferase A (MGAT5) from Cricetulus griseus (Chinese hamster).